A 103-amino-acid polypeptide reads, in one-letter code: Large ribosomal subunit protein bL21 (103 aa).

The protein belongs to the bacterial ribosomal protein bL21 family. As to quaternary structure, part of the 50S ribosomal subunit. Contacts protein L20.

This protein binds to 23S rRNA in the presence of protein L20. The protein is Large ribosomal subunit protein bL21 of Verminephrobacter eiseniae (strain EF01-2).